Consider the following 539-residue polypeptide: Phosphoenolpyruvate carboxykinase (ATP) (539 aa).

R61, Y195, and K201 together coordinate substrate. ATP is bound by residues K201, H220, and 238–246 (GLSGTGKTT). The Mn(2+) site is built by K201 and H220. Residue D259 participates in Mn(2+) binding. ATP-binding residues include E287, R325, and T450. R325 serves as a coordination point for substrate.

The protein belongs to the phosphoenolpyruvate carboxykinase (ATP) family. The cofactor is Mn(2+).

The protein localises to the cytoplasm. The enzyme catalyses oxaloacetate + ATP = phosphoenolpyruvate + ADP + CO2. Its pathway is carbohydrate biosynthesis; gluconeogenesis. Its function is as follows. Involved in the gluconeogenesis. Catalyzes the conversion of oxaloacetate (OAA) to phosphoenolpyruvate (PEP) through direct phosphoryl transfer between the nucleoside triphosphate and OAA. This Methylorubrum populi (strain ATCC BAA-705 / NCIMB 13946 / BJ001) (Methylobacterium populi) protein is Phosphoenolpyruvate carboxykinase (ATP).